We begin with the raw amino-acid sequence, 141 residues long: Hemoglobin subunit alpha-3 (141 aa).

S1 carries the N-acetylserine modification. The region spanning 1-141 (SLSASEKAAV…VSAVLTSKYR (141 aa)) is the Globin domain. H58 provides a ligand contact to O2. Heme b is bound at residue H87.

It belongs to the globin family. Heterotetramer of two alpha chains and two beta chains. Red blood cells.

In terms of biological role, this is a tadpole (larval) alpha chain. The sequence is that of Hemoglobin subunit alpha-3 from Aquarana catesbeiana (American bullfrog).